Here is a 156-residue protein sequence, read N- to C-terminus: Transcription elongation factor GreA (156 aa).

A coiled-coil region spans residues 46 to 66; sequence AEYHAAREKQSFVEGRIKELE.

Belongs to the GreA/GreB family.

Functionally, necessary for efficient RNA polymerase transcription elongation past template-encoded arresting sites. The arresting sites in DNA have the property of trapping a certain fraction of elongating RNA polymerases that pass through, resulting in locked ternary complexes. Cleavage of the nascent transcript by cleavage factors such as GreA or GreB allows the resumption of elongation from the new 3'terminus. GreA releases sequences of 2 to 3 nucleotides. In Paracoccus denitrificans (strain Pd 1222), this protein is Transcription elongation factor GreA.